Consider the following 616-residue polypeptide: Dihydroxy-acid dehydratase (616 aa).

Asp-81 lines the Mg(2+) pocket. A [2Fe-2S] cluster-binding site is contributed by Cys-122. 2 residues coordinate Mg(2+): Asp-123 and Lys-124. The residue at position 124 (Lys-124) is an N6-carboxylysine. Residue Cys-195 coordinates [2Fe-2S] cluster. Glu-491 serves as a coordination point for Mg(2+). Ser-517 (proton acceptor) is an active-site residue.

It belongs to the IlvD/Edd family. In terms of assembly, homodimer. [2Fe-2S] cluster serves as cofactor. Requires Mg(2+) as cofactor.

It carries out the reaction (2R)-2,3-dihydroxy-3-methylbutanoate = 3-methyl-2-oxobutanoate + H2O. The catalysed reaction is (2R,3R)-2,3-dihydroxy-3-methylpentanoate = (S)-3-methyl-2-oxopentanoate + H2O. The protein operates within amino-acid biosynthesis; L-isoleucine biosynthesis; L-isoleucine from 2-oxobutanoate: step 3/4. It participates in amino-acid biosynthesis; L-valine biosynthesis; L-valine from pyruvate: step 3/4. In terms of biological role, functions in the biosynthesis of branched-chain amino acids. Catalyzes the dehydration of (2R,3R)-2,3-dihydroxy-3-methylpentanoate (2,3-dihydroxy-3-methylvalerate) into 2-oxo-3-methylpentanoate (2-oxo-3-methylvalerate) and of (2R)-2,3-dihydroxy-3-methylbutanoate (2,3-dihydroxyisovalerate) into 2-oxo-3-methylbutanoate (2-oxoisovalerate), the penultimate precursor to L-isoleucine and L-valine, respectively. The polypeptide is Dihydroxy-acid dehydratase (Pectobacterium carotovorum subsp. carotovorum (strain PC1)).